A 443-amino-acid chain; its full sequence is Putative transporter AmpG 1 (443 aa).

Transmembrane regions (helical) follow at residues 5–25 (SHIY…MITG), 42–62 (IGML…APVF), 78–98 (LSWI…LSFL), 104–124 (LVLL…QDTI), 143–163 (GIYI…AIYL), 171–191 (AIYK…ILVA), 230–250 (FNYF…GFYF), 254–274 (DINL…YRLP), 299–319 (VCKF…GIIM), 324–344 (ILYS…FFIL), 354–374 (ILFI…TAYI), 393–413 (LSSM…YMVV), and 415–435 (FGWQ…LLIL).

This sequence belongs to the major facilitator superfamily.

Its subcellular location is the cell inner membrane. This Rickettsia prowazekii (strain Madrid E) protein is Putative transporter AmpG 1 (ampG1).